Reading from the N-terminus, the 324-residue chain is Pancreas transcription factor 1 subunit alpha (324 aa).

The region spanning Q160–L212 is the bHLH domain. Positions D302–S324 are disordered.

As to quaternary structure, component of the pancreas transcription factor 1 complex (PTF1) which is composed of TCF3/p75, TCF12/p64 and PTF1A/p48. TCF3 is responsible for the nuclear import of the p48/p64 complex. Interacts with TCF3 and RBPSUH/RBP-Jkappa. As to expression, expressed in precursors of pancreatic islets, acini and ducts.

Its subcellular location is the nucleus. It localises to the cytoplasm. In terms of biological role, transcription factor implicated in the cell fate determination in various organs. Binds to the E-box consensus sequence 5'-CANNTG-3'. Plays a role in early and late pancreas development and differentiation. Important for determining whether cells allocated to the pancreatic buds continue towards pancreatic organogenesis or revert back to duodenal fates. May be involved in the maintenance of exocrine pancreas-specific gene expression including ELA1 and amylase. Required for the formation of pancreatic acinar and ductal cells. Plays an important role in cerebellar development. Directly regulated by FOXN4 and RORC during retinal development, FOXN4-PTF1A pathway plays a central role in directing the differentiation of retinal progenitors towards horizontal and amacrine fates. In Mus musculus (Mouse), this protein is Pancreas transcription factor 1 subunit alpha (Ptf1a).